Here is a 617-residue protein sequence, read N- to C-terminus: Manganese lipoxygenase (617 aa).

The N-terminal stretch at 1–17 is a signal peptide; the sequence is MRIGLLAFAVAARYVEA. A compositionally biased stretch (low complexity) spans 23–48; it reads GEEVASSSAPTTLPSTSSSSALPSPT. Positions 23-59 are disordered; the sequence is GEEVASSSAPTTLPSTSSSSALPSPTKYTLPHEDPNP. Residues Asn-109, Asn-119, and Asn-160 are each glycosylated (N-linked (GlcNAc...) asparagine). One can recognise a Lipoxygenase domain in the interval 122–617; that stretch reads LRDIQSHGGL…PAVNPFFLSI (496 aa). His-293, His-297, His-479, and Asn-483 together coordinate Mn(2+). A glycan (N-linked (GlcNAc...) asparagine) is linked at Asn-547. Residue Ile-617 coordinates Mn(2+).

It belongs to the lipoxygenase family. Manganese lipoxygenase subfamily. Mn(2+) serves as cofactor.

The protein resides in the secreted. It carries out the reaction (9Z,12Z)-octadecadienoate + O2 = (9S)-hydroperoxy-(10E,12Z)-octadecadienoate. The enzyme catalyses (9Z,12Z)-octadecadienoate + O2 = (11S)-hydroperoxy-(9Z,12Z)-octadecadienoate. It catalyses the reaction (9Z,12Z)-octadecadienoate + O2 = (13R)-hydroperoxy-(9Z,11E)-octadecadienoate. The catalysed reaction is (9Z,12Z,15Z)-octadecatrienoate + O2 = (9S)-hydroperoxy-(10E,12Z,15Z)-octadecatrienoate. It carries out the reaction (9Z,12Z,15Z)-octadecatrienoate + O2 = (11R)-hydroperoxy-(9Z,12Z,15Z)-octadecatrienoate. The enzyme catalyses (9Z,12Z,15Z)-octadecatrienoate + O2 = (13R)-hydroperoxy-(9Z,11E,15Z)-octadecatrienoate. Functionally, lipoxygenase that metabolizes linoleic and alpha-linolenic acids to 9S-, 11- and 13R-hydroperoxy fatty acids. At the end of lipoxygenation, the intermediate products 11S-HPODE and 13R-HPODE from linoleic acid are then transformed into 9S-HPODE as the final product. The intermediate product 11R-HPOTrE from alpha-linolenic acid is transformed into 9S-HPOTrE and 13R-HPOTrE as the final products. 9S-HPOTrE is further oxidized by the enzyme to 9,16-DiHOTrE as the end product. Also acts on gamma-linolenic acid producing 9-HOTrE(n-6) as the main metabolite. This is Manganese lipoxygenase from Nakataea oryzae (Rice stem rot fungus).